The sequence spans 553 residues: Methyl-coenzyme M reductase II subunit alpha (553 aa).

Gln150 lines the coenzyme F430 pocket. Coenzyme B is bound by residues Arg228, 259–260, and Arg273; that span reads KH. A Pros-methylhistidine modification is found at His260. A 5-methylarginine modification is found at Arg274. Residue Tyr335 coordinates coenzyme M. 2-methylglutamine is present on Gln402. Tyr446 is a binding site for coenzyme M. A 1-thioglycine modification is found at Gly447. Asp452 carries the (Z)-2,3-didehydroaspartate modification. Cys454 carries the post-translational modification S-methylcysteine.

This sequence belongs to the methyl-coenzyme M reductase alpha subunit family. MCR is a hexamer of two alpha, two beta, and two gamma chains, forming a dimer of heterotrimers. Coenzyme F430 serves as cofactor. Post-translationally, the alpha subunit contains six modified amino acids near the active site region. Is methylated on His-260, Arg-274, Gln-402 and Cys-454, probably by the action of specific S-adenosylmethionine-dependent methyltransferases. Also contains a thioglycine at position 447, forming a thiopeptide bond. Contains a didehydroaspartate residue at position 452. The methylation on C5 of Arg-274 is a post-translational methylation not essential in vivo, but which plays a role for the stability and structural integrity of MCR.

It carries out the reaction coenzyme B + methyl-coenzyme M = methane + coenzyme M-coenzyme B heterodisulfide. The protein operates within one-carbon metabolism; methyl-coenzyme M reduction; methane from methyl-coenzyme M: step 1/1. Its function is as follows. Component of the methyl-coenzyme M reductase (MCR) I that catalyzes the reductive cleavage of methyl-coenzyme M (CoM-S-CH3 or 2-(methylthio)ethanesulfonate) using coenzyme B (CoB or 7-mercaptoheptanoylthreonine phosphate) as reductant which results in the production of methane and the mixed heterodisulfide of CoB and CoM (CoM-S-S-CoB). This is the final step in methanogenesis. The polypeptide is Methyl-coenzyme M reductase II subunit alpha (mrtA) (Methanothermobacter marburgensis (strain ATCC BAA-927 / DSM 2133 / JCM 14651 / NBRC 100331 / OCM 82 / Marburg) (Methanobacterium thermoautotrophicum)).